We begin with the raw amino-acid sequence, 738 residues long: Sporulation kinase E (738 aa).

4 consecutive PAS domains span residues 29–99 (ELNQ…FKKG), 150–220 (NEQL…NRKG), 271–342 (SEER…YGEI), and 391–462 (SELK…FDEM). Positions 523 to 729 (GIAHEIRNPM…VFHITLPVRQ (207 aa)) constitute a Histidine kinase domain. The residue at position 526 (His-526) is a Phosphohistidine; by autocatalysis.

The enzyme catalyses ATP + protein L-histidine = ADP + protein N-phospho-L-histidine.. Its function is as follows. Phosphorylates the sporulation-regulatory protein spo0A under biofilm growth conditions. Also able to weakly phosphorylate spo0F. In Bacillus subtilis (strain 168), this protein is Sporulation kinase E (kinE).